Reading from the N-terminus, the 302-residue chain is (2S)-3-sulfopropanediol sulfolyase activating enzyme (302 aa).

The Radical SAM core domain maps to 19–301; the sequence is HDGEGIRTLV…RLNIMLKSYE (283 aa). The [4Fe-4S] cluster site is built by Cys33, Cys37, Cys40, Cys59, Cys65, Cys68, Cys72, Cys91, Cys94, Cys97, and Cys101. S-adenosyl-L-methionine is bound at residue 39–41; it reads WCS. 2 consecutive 4Fe-4S ferredoxin-type domains span residues 50–81 and 82–111; these read PERAYNPTRCLTAAVCGRCAKACPTGAVSIVG and GLVCFDRSKCTGCNACVRACPSGAQTVYGE. S-adenosyl-L-methionine-binding positions include Gly141 and 190-192; that span reads DIK.

This sequence belongs to the organic radical-activating enzymes family. [4Fe-4S] cluster is required as a cofactor.

It carries out the reaction glycyl-[protein] + reduced [flavodoxin] + S-adenosyl-L-methionine = glycin-2-yl radical-[protein] + semiquinone [flavodoxin] + 5'-deoxyadenosine + L-methionine + H(+). It participates in organosulfur degradation; alkanesulfonate degradation. Involved in the degradation of the organosulfur compound 2(S)-dihydroxypropanesulfonate (DHPS). Catalyzes activation of the (2S)-3-sulfopropanediol sulfolyase HpsG under anaerobic conditions by generation of an organic free radical on a glycine residue. This chain is (2S)-3-sulfopropanediol sulfolyase activating enzyme, found in Bilophila wadsworthia (strain 3_1_6).